Here is a 336-residue protein sequence, read N- to C-terminus: Retinol dehydrogenase 10-B (336 aa).

The chain crosses the membrane as a helical; Signal-anchor span at residues leucine 7 to isoleucine 27. Valine 40–valine 64 provides a ligand contact to NADP(+). Position 192 (serine 192) interacts with substrate. The Proton acceptor role is filled by tyrosine 205.

Belongs to the short-chain dehydrogenases/reductases (SDR) family.

The protein localises to the microsome membrane. Its subcellular location is the endoplasmic reticulum membrane. The enzyme catalyses all-trans-retinol + NADP(+) = all-trans-retinal + NADPH + H(+). It functions in the pathway cofactor metabolism; retinol metabolism. Retinol dehydrogenase with a clear preference for NADP. Converts all-trans-retinol to all-trans-retinal. Has no detectable activity towards 11-cis-retinol, 9-cis-retinol and 13-cis-retinol. The polypeptide is Retinol dehydrogenase 10-B (rdh10b) (Danio rerio (Zebrafish)).